Here is a 617-residue protein sequence, read N- to C-terminus: UvrABC system protein C (617 aa).

The 75-residue stretch at 11-85 (TTPGVYIFRK…IKQHRPHYNV (75 aa)) folds into the GIY-YIG domain. Residues 194–229 (APVIARLKEDMKVAAQGQDFEQAARLRDRVQAVEKL) enclose the UVR domain.

This sequence belongs to the UvrC family. Interacts with UvrB in an incision complex.

The protein resides in the cytoplasm. Functionally, the UvrABC repair system catalyzes the recognition and processing of DNA lesions. UvrC both incises the 5' and 3' sides of the lesion. The N-terminal half is responsible for the 3' incision and the C-terminal half is responsible for the 5' incision. The chain is UvrABC system protein C from Deinococcus radiodurans (strain ATCC 13939 / DSM 20539 / JCM 16871 / CCUG 27074 / LMG 4051 / NBRC 15346 / NCIMB 9279 / VKM B-1422 / R1).